Here is a 59-residue protein sequence, read N- to C-terminus: Large ribosomal subunit protein uL30 (59 aa).

Belongs to the universal ribosomal protein uL30 family. Part of the 50S ribosomal subunit.

This is Large ribosomal subunit protein uL30 from Geotalea daltonii (strain DSM 22248 / JCM 15807 / FRC-32) (Geobacter daltonii).